The chain runs to 331 residues: Glycerol-3-phosphate dehydrogenase [NAD(P)+] (331 aa).

Residues S10, W11, and K101 each contribute to the NADPH site. 3 residues coordinate sn-glycerol 3-phosphate: K101, G132, and S134. A136 contacts NADPH. Residues K188, D241, S251, R252, and N253 each contribute to the sn-glycerol 3-phosphate site. The Proton acceptor role is filled by K188. Position 252 (R252) interacts with NADPH. NADPH-binding residues include V276 and E278.

It belongs to the NAD-dependent glycerol-3-phosphate dehydrogenase family.

It localises to the cytoplasm. It catalyses the reaction sn-glycerol 3-phosphate + NAD(+) = dihydroxyacetone phosphate + NADH + H(+). It carries out the reaction sn-glycerol 3-phosphate + NADP(+) = dihydroxyacetone phosphate + NADPH + H(+). It functions in the pathway membrane lipid metabolism; glycerophospholipid metabolism. In terms of biological role, catalyzes the reduction of the glycolytic intermediate dihydroxyacetone phosphate (DHAP) to sn-glycerol 3-phosphate (G3P), the key precursor for phospholipid synthesis. The polypeptide is Glycerol-3-phosphate dehydrogenase [NAD(P)+] (Acholeplasma laidlawii (strain PG-8A)).